Consider the following 575-residue polypeptide: G protein-coupled receptor kinase 4 (575 aa).

Residue Met1 is modified to N-acetylmethionine. Residues 1–153 (MELENFMANT…DCAGVIYKYL (153 aa)) form an N-terminal region. The RGS domain maps to 51–171 (DFSSLCDQQP…QESTYYNRFL (121 aa)). The Protein kinase domain occupies 186-448 (FRQYRVLGKG…ASAVKQHPIF (263 aa)). ATP-binding positions include 192-200 (LGKGGFGEV) and Lys215. Asp311 (proton acceptor) is an active-site residue. Positions 449–514 (KDINFSRLEA…GCVTIPWQNE (66 aa)) constitute an AGC-kinase C-terminal domain. The residue at position 484 (Ser484) is a Phosphoserine.

This sequence belongs to the protein kinase superfamily. AGC Ser/Thr protein kinase family. GPRK subfamily. In terms of assembly, interacts with DRD3. Palmitoylated. In terms of tissue distribution, isoform GRK4A is expressed in testis. Isoform GRK4B is heterogeneously distributed in the kidney, with 20-fold enrichment in the outer medulla. Has a widespread but low level of expression in tissues other than testis.

Its subcellular location is the cytoplasm. It is found in the cell cortex. The catalysed reaction is [G-protein-coupled receptor] + ATP = [G-protein-coupled receptor]-phosphate + ADP + H(+). Inhibited by heparin. In terms of biological role, specifically phosphorylates the activated forms of G protein-coupled receptors. Plays an important role in the regulation of renal sodium handling and blood pressure. In Rattus norvegicus (Rat), this protein is G protein-coupled receptor kinase 4 (Grk4).